Consider the following 60-residue polypeptide: Large ribosomal subunit protein eL37 (60 aa).

Positions 19, 22, 34, and 37 each coordinate Zn(2+). The segment at 19 to 37 (CRRCGSISYHARHKVCSAC) adopts a C4-type zinc-finger fold.

This sequence belongs to the eukaryotic ribosomal protein eL37 family. Requires Zn(2+) as cofactor.

In terms of biological role, binds to the 23S rRNA. This chain is Large ribosomal subunit protein eL37, found in Methanosphaerula palustris (strain ATCC BAA-1556 / DSM 19958 / E1-9c).